The chain runs to 612 residues: Sulfite reductase [NADPH] flavoprotein alpha-component (612 aa).

In terms of domain architecture, Flavodoxin-like spans 64–202; that stretch reads VTLISASQTG…QAQQWRQQVV (139 aa). FMN is bound by residues 70–75, 117–120, and 153–162; these read SQTGNA, STQG, and LGDTSYEHFC. Positions 247–461 constitute an FAD-binding FR-type domain; it reads TAPLTAQLSV…IEHNDNFRLP (215 aa). Residues T335, K369, 399 to 402, 417 to 419, Y423, and 432 to 435 each bind FAD; these read RLYS, TVG, and GGAS. NADP(+)-binding positions include 532 to 533, 538 to 542, and D574; these read SR and KIYVQ. Y612 contacts FAD.

Belongs to the NADPH-dependent sulphite reductase flavoprotein subunit CysJ family. The protein in the N-terminal section; belongs to the flavodoxin family. This sequence in the C-terminal section; belongs to the flavoprotein pyridine nucleotide cytochrome reductase family. In terms of assembly, alpha(8)-beta(8). The alpha component is a flavoprotein, the beta component is a hemoprotein. The cofactor is FAD. It depends on FMN as a cofactor.

The catalysed reaction is hydrogen sulfide + 3 NADP(+) + 3 H2O = sulfite + 3 NADPH + 4 H(+). The protein operates within sulfur metabolism; hydrogen sulfide biosynthesis; hydrogen sulfide from sulfite (NADPH route): step 1/1. In terms of biological role, component of the sulfite reductase complex that catalyzes the 6-electron reduction of sulfite to sulfide. This is one of several activities required for the biosynthesis of L-cysteine from sulfate. The flavoprotein component catalyzes the electron flow from NADPH -&gt; FAD -&gt; FMN to the hemoprotein component. This Yersinia pestis bv. Antiqua (strain Nepal516) protein is Sulfite reductase [NADPH] flavoprotein alpha-component.